Here is a 132-residue protein sequence, read N- to C-terminus: Small ribosomal subunit protein bS16 (132 aa).

Positions 82-107 (DSKVQSKKEHNANKVKKEVKKPEAKK) are enriched in basic and acidic residues. The tract at residues 82–132 (DSKVQSKKEHNANKVKKEVKKPEAKKAAASKPASKPSASKSASQKKTVSKK) is disordered. The segment covering 108-132 (AAASKPASKPSASKSASQKKTVSKK) has biased composition (low complexity).

It belongs to the bacterial ribosomal protein bS16 family.

The polypeptide is Small ribosomal subunit protein bS16 (Malacoplasma penetrans (strain HF-2) (Mycoplasma penetrans)).